A 1159-amino-acid polypeptide reads, in one-letter code: Calcium-activated potassium channel subunit alpha-1 (1159 aa).

Residues 1-24 lie on the Extracellular side of the membrane; that stretch reads EPNMDALIIPVTMEVPCDSRGQRM. Residues 25–45 traverse the membrane as a helical segment; the sequence is WWAFLASSMVTFFGGLFIILL. The Cytoplasmic segment spans residues 46–116; it reads WRTLKYLWTV…MISAQTLTGR (71 aa). Residues cysteine 56, cysteine 57, and cysteine 59 are each lipidated (S-palmitoyl cysteine). Residues 117-137 traverse the membrane as a helical segment; the sequence is VLVVLVFALSIGALVIYFIDS. At 138-152 the chain is on the extracellular side; the sequence is SNPIESCQNFYKDFT. Residues 153 to 173 traverse the membrane as a helical segment; sequence LQIDMAFNVFFLLYFGLRFIA. Residues 174–177 lie on the Cytoplasmic side of the membrane; it reads ANDN. A helical membrane pass occupies residues 178-198; that stretch reads LWFWLEVNSVVDFFTVPPVFV. The Extracellular segment spans residues 199 to 202; the sequence is SVYL. The helical; Voltage-sensor transmembrane segment at 203 to 223 threads the bilayer; the sequence is NRSWLGLRFLRALRLIQFSEI. At 224 to 238 the chain is on the cytoplasmic side; it reads LQFLNILKTSNSIKL. The chain crosses the membrane as a helical span at residues 239–259; that stretch reads VNLLSIFISTWLTAAGFIHLV. The Extracellular segment spans residues 260–273; that stretch reads ENSGDPWENFQNSQ. An intramembrane region (pore-forming) is located at residues 274 to 296; that stretch reads ALTYWECVYLLMVTMSTVGYGDV. The short motif at 290 to 293 is the Selectivity for potassium element; sequence TVGY. The Extracellular segment spans residues 297–305; it reads YAKTTPGGL. Residues 306-326 form a helical membrane-spanning segment; the sequence is FIVFFILGGLAMFASYVPEII. Residues 327 to 1159 lie on the Cytoplasmic side of the membrane; sequence EIIGNRKKYG…PPIREVEDEC (833 aa). The region spanning 345–487 is the RCK N-terminal 1 domain; sequence RKHIVVCGHI…WNWKEGDDAI (143 aa). Mg(2+) contacts are provided by glutamate 377, glutamine 400, and glutamate 402. Residues 494 to 514 form a segment S7 region; that stretch reads LGFIAQSCLAQGLSTMLANLF. Residues 551–571 form a segment S8 region; that stretch reads LSFPTVCELCFVKLKLLMIAI. The interval 615-619 is heme-binding motif; it reads CKACH. A disordered region spans residues 639–668; it reads EQPSTLSPKKKQRNGGMRNSPSSSPKLMRH. A Phosphothreonine modification is found at threonine 643. Phosphoserine occurs at positions 645, 658, and 662. The tract at residues 717–737 is segment S9; it reads VLSGHVVVCIFGHVSSALIGL. The RCK N-terminal 2 domain maps to 719 to 863; the sequence is SGHVVVCIFG…MDKSSPDNSP (145 aa). The residue at position 850 (threonine 850) is a Phosphothreonine. A phosphoserine mark is found at serine 858 and serine 862. A Calcium bowl motif is present at residues 883-905; sequence TELVNDTNVQFLDQDDDDDPDTE. Residues glutamine 892, aspartate 895, aspartate 898, and aspartate 900 each coordinate Ca(2+). The tract at residues 912 to 932 is segment S10; sequence FACGTAFAVSVLDSLMSATYF. Over residues 1066–1091 the composition is skewed to low complexity; sequence RASLSHSSHSSQSSSKKSSSVHSIPS. The tract at residues 1066-1124 is disordered; the sequence is RASLSHSSHSSQSSSKKSSSVHSIPSTANRQNRPKSRESRDKQTEKKWFTDEPDNAYPR. A compositionally biased stretch (basic and acidic residues) spans 1100 to 1115; sequence KSRESRDKQTEKKWFT. 2 positions are modified to phosphoserine: serine 1101 and serine 1104.

This sequence belongs to the potassium channel family. Calcium-activated (TC 1.A.1.3) subfamily. KCa1.1/KCNMA1 sub-subfamily. Homotetramer; which constitutes the calcium-activated potassium channel. Interacts with beta subunits KCNMB1, KCNMB2, KCNMB3 and KCNMB4. Interacts with gamma subunits LRRC26, LRRC38, LRRC52 and LRRC55. Beta and gamma subunits are accessory, and modulate its activity. Interacts with RAB11B. Phosphorylated. Phosphorylation by kinases such as PKA and/or PKG. In smooth muscles, phosphorylation affects its activity. Post-translationally, palmitoylation by ZDHHC22 and ZDHHC23 within the intracellular linker between the S0 and S1 transmembrane domains regulates localization to the plasma membrane. Depalmitoylated by LYPLA1 and LYPLAL1, leading to retard exit from the trans-Golgi network. Expressed in all vascular and smooth muscles.

The protein resides in the cell membrane. The catalysed reaction is K(+)(in) = K(+)(out). With respect to regulation, ethanol and carbon monoxide-bound heme increase channel activation. Heme inhibits channel activation. In terms of biological role, potassium channel activated by both membrane depolarization or increase in cytosolic Ca(2+) that mediates export of K(+). It is also activated by the concentration of cytosolic Mg(2+). Its activation dampens the excitatory events that elevate the cytosolic Ca(2+) concentration and/or depolarize the cell membrane. It therefore contributes to repolarization of the membrane potential. Plays a key role in controlling excitability in a number of systems, such as regulation of the contraction of smooth muscle, the tuning of hair cells in the cochlea, regulation of transmitter release, and innate immunity. In smooth muscles, its activation by high level of Ca(2+), caused by ryanodine receptors in the sarcoplasmic reticulum, regulates the membrane potential. In cochlea cells, its number and kinetic properties partly determine the characteristic frequency of each hair cell and thereby helps to establish a tonotopic map. Kinetics of KCNMA1 channels are determined by alternative splicing, phosphorylation status and its combination with modulating beta subunits. Highly sensitive to both iberiotoxin (IbTx) and charybdotoxin (CTX). The sequence is that of Calcium-activated potassium channel subunit alpha-1 (KCNMA1) from Canis lupus familiaris (Dog).